A 204-amino-acid polypeptide reads, in one-letter code: N-(5'-phosphoribosyl)anthranilate isomerase (204 aa).

This sequence belongs to the TrpF family.

The catalysed reaction is N-(5-phospho-beta-D-ribosyl)anthranilate = 1-(2-carboxyphenylamino)-1-deoxy-D-ribulose 5-phosphate. It participates in amino-acid biosynthesis; L-tryptophan biosynthesis; L-tryptophan from chorismate: step 3/5. This is N-(5'-phosphoribosyl)anthranilate isomerase from Oceanobacillus iheyensis (strain DSM 14371 / CIP 107618 / JCM 11309 / KCTC 3954 / HTE831).